Here is an 843-residue protein sequence, read N- to C-terminus: Structure-specific endonuclease subunit SLX4 (843 aa).

Disordered stretches follow at residues 26 to 111 (SPPS…KTTT), 281 to 313 (AIPT…QKGK), 339 to 377 (NVAP…NGPP), 603 to 655 (SKTF…AKAL), and 729 to 748 (ATPN…FSIE). Polar residues-rich tracts occupy residues 50 to 69 (ASFS…NGEN) and 285 to 301 (PTES…SSKQ). Residues 302–311 (QRVKAKKPQK) show a composition bias toward basic residues. Polar residues-rich tracts occupy residues 349–372 (NISN…TLKN) and 603–616 (SKTF…NQGT). Residues 617–636 (DDARKNGFRKENHSDVRVRP) show a composition bias toward basic and acidic residues. Over residues 739–748 (RSSSTSFSIE) the composition is skewed to low complexity.

It belongs to the SLX4 family. Forms a heterodimer with SLX1. In terms of processing, phosphorylated in response to DNA damage.

Its subcellular location is the nucleus. Its function is as follows. Regulatory subunit of the SLX1-SLX4 structure-specific endonuclease that resolves DNA secondary structures generated during DNA repair and recombination. Has endonuclease activity towards branched DNA substrates, introducing single-strand cuts in duplex DNA close to junctions with ss-DNA. This chain is Structure-specific endonuclease subunit SLX4, found in Ajellomyces capsulatus (strain G186AR / H82 / ATCC MYA-2454 / RMSCC 2432) (Darling's disease fungus).